The chain runs to 512 residues: 2-isopropylmalate synthase (512 aa).

The 263-residue stretch at 5–267 folds into the Pyruvate carboxyltransferase domain; that stretch reads VVIFDTTLRD…ETSINKSEIY (263 aa). Mn(2+) is bound by residues Asp14, His202, His204, and Asn238. Positions 391–512 are regulatory domain; it reads SLEYLHITSG…LPKAKTERAV (122 aa).

This sequence belongs to the alpha-IPM synthase/homocitrate synthase family. LeuA type 1 subfamily. In terms of assembly, homodimer. Mn(2+) is required as a cofactor.

The protein resides in the cytoplasm. The catalysed reaction is 3-methyl-2-oxobutanoate + acetyl-CoA + H2O = (2S)-2-isopropylmalate + CoA + H(+). It participates in amino-acid biosynthesis; L-leucine biosynthesis; L-leucine from 3-methyl-2-oxobutanoate: step 1/4. Its function is as follows. Catalyzes the condensation of the acetyl group of acetyl-CoA with 3-methyl-2-oxobutanoate (2-ketoisovalerate) to form 3-carboxy-3-hydroxy-4-methylpentanoate (2-isopropylmalate). The sequence is that of 2-isopropylmalate synthase from Heliobacterium modesticaldum (strain ATCC 51547 / Ice1).